Consider the following 284-residue polypeptide: MKKLTTLLLASTLLIAACGNDDSKKDDSKTSKKDDGVKAELKQATKAYDKYTDEQLNEFLKGTEKFVKAIENNDMAQAKALYPKVRMYYERSEPVAEAFGDLDPKIDARLADMKEEKKEKEWSGYHKIEKALYEDKKIDDVTKKDAQQLLKDAKELHAKADTLDITPKLMLQGSVDLLNEVATSKITGEEEIYSHTDLYDFKANVEGAQKIYDLFKPILEKKDKKLSDDIQMNFDKVNQLLDKYKDNNGGYESFEKVSKKDRKAFADAVNALGEPLSKMAVITE.

Residues 1–17 form the signal peptide; the sequence is MKKLTTLLLASTLLIAA. Residue cysteine 18 is the site of N-palmitoyl cysteine attachment. A lipid anchor (S-diacylglycerol cysteine) is attached at cysteine 18.

Belongs to the EfeM/EfeO family.

Its subcellular location is the cell membrane. The chain is Efem/EfeO family lipoprotein from Staphylococcus aureus (strain NCTC 8325 / PS 47).